The chain runs to 385 residues: uncharacterized protein (385 aa).

This sequence belongs to the phage portal family. HK97 subfamily.

This is an uncharacterized protein from Rickettsia bellii (strain RML369-C).